A 392-amino-acid chain; its full sequence is Pannexin-3 (392 aa).

Residues 1 to 39 (MSLAHTAAEYMLSDALLPDRRGPRLKGLRLELPLDRIVK) are Cytoplasmic-facing. A helical transmembrane segment spans residues 40-60 (FVAVGSPLLLMSLAFAQEFSS). The Extracellular segment spans residues 61 to 113 (GSPISCFSPSNFSIRQAAYVDSSCWDSLLHHKQDGPGQDKMKSLWPHKALPYS). A glycan (N-linked (GlcNAc...) asparagine) is linked at Asn-71. Residues 114 to 134 (LLALALLMYLPVLLWQYAAVP) traverse the membrane as a helical segment. Topologically, residues 135–215 (ALSSDLLFII…VATYLLRNSL (81 aa)) are cytoplasmic. The helical transmembrane segment at 216–236 (LLIFTSATYLYLGHFHLDVFF) threads the bilayer. Residues 237 to 267 (QEEFSCSIKTGLLSDETHVPNLITCRLTSLS) lie on the Extracellular side of the membrane. A helical membrane pass occupies residues 268–288 (IFQIVSLSSVAIYTILVPVII). The Cytoplasmic segment spans residues 289–392 (YNLTRLCRWD…LTNSACDEHP (104 aa)).

This sequence belongs to the pannexin family. Homoheptameric.

It localises to the cell membrane. Its subcellular location is the cell junction. It is found in the gap junction. The protein resides in the endoplasmic reticulum membrane. It catalyses the reaction Ca(2+)(in) = Ca(2+)(out). The catalysed reaction is ATP(in) = ATP(out). Its function is as follows. Regulator of osteoblast differentiation by functionning as a Ca(2+) channel in the endoplasmic reticulum which regulates calmodulin (CaM) pathways. Allows ATP release into the extracellular space and activation or purinergic receptors. In Homo sapiens (Human), this protein is Pannexin-3.